The following is a 239-amino-acid chain: Small ribosomal subunit protein uS2 (239 aa).

It belongs to the universal ribosomal protein uS2 family.

This Synechococcus sp. (strain CC9902) protein is Small ribosomal subunit protein uS2.